The following is an 859-amino-acid chain: Protein FAM171A1 (859 aa).

An N-terminal signal peptide occupies residues 1-20 (MSGSTAVALLFCVLSCSVWG). The Extracellular portion of the chain corresponds to 21–307 (AGSKASHEHN…VTQDITSYHT (287 aa)). N163, N194, and N198 each carry an N-linked (GlcNAc...) asparagine glycan. Residues 308-328 (IFLLAILGGIAFILLVLLCIL) traverse the membrane as a helical segment. The Cytoplasmic portion of the chain corresponds to 329 to 859 (LYYCRRKCLK…ERPLLAFNKK (531 aa)). 3 disordered regions span residues 397–421 (SRDF…LDNL), 484–509 (TNHV…PEPE), and 771–859 (QSPS…FNKK). Basic and acidic residues predominate over residues 400-416 (FGSREELLSHQEEKSRM). Polar residues-rich tracts occupy residues 484 to 497 (TNHV…NIQE) and 797 to 806 (SGSQTPSLQE). The span at 838 to 852 (GENKKSPWQKREERP) shows a compositional bias: basic and acidic residues.

It belongs to the FAM171 family.

It is found in the cell membrane. In terms of biological role, may be involved in the regulation of the cytoskeletal dynamics, plays a role in actin stress fiber formation. The chain is Protein FAM171A1 (fam171a1) from Xenopus laevis (African clawed frog).